Reading from the N-terminus, the 5084-residue chain is Apicidin F synthase (5084 aa).

An adenylation 1 region spans residues 209–606 (ARILQRQPDK…VGRLDSQVKL (398 aa)). The Carrier 1 domain occupies 731 to 808 (HETDNCQRLL…EAASSMREVV (78 aa)). The residue at position 768 (S768) is an O-(pantetheine 4'-phosphoryl)serine. Condensation stretches follow at residues 822–1124 (YPLS…FPIY) and 1309–1609 (EIYC…SILV). The tract at residues 1788–2192 (EDPTREAVFS…IGRKDNQIKI (405 aa)) is adenylation 2. The 75-residue stretch at 2341–2415 (VVKDDPVSEL…DMAKGMAPLS (75 aa)) folds into the Carrier 2 domain. An O-(pantetheine 4'-phosphoryl)serine modification is found at S2376. The disordered stretch occupies residues 2415-2441 (SLTAPESTSSSSPQSFSTSTSTTIIEN). Residues 2421-2437 (STSSSSPQSFSTSTSTT) show a composition bias toward low complexity. A condensation 3 region spans residues 2478–2755 (EDIFPCTPMQ…IVTLPRQLNI (278 aa)). Residues 2935–3328 (RNNPRARAVV…GRRDGQIKLR (394 aa)) form an adenylation 3 region. Residues 3463 to 3539 (ETWSSSEAIV…DMASRLSRPE (77 aa)) form the Carrier 3 domain. S3500 is subject to O-(pantetheine 4'-phosphoryl)serine. Residues 3581–3866 (EDIYPCTPLQ…IATVPSRTTI (286 aa)) form a condensation 4 region. Residues 4029-4426 (RKQVELSPSH…TVSWIGRKDH (398 aa)) are adenylation 4. One can recognise a Carrier 4 domain in the interval 4554-4631 (ALKTPKERLL…DMADLLGPLR (78 aa)). S4592 is subject to O-(pantetheine 4'-phosphoryl)serine. A condensation 5 region spans residues 4669-4948 (EQIYPCTAYQ…ISKLPLRIQL (280 aa)).

This sequence belongs to the NRP synthetase family.

The protein operates within secondary metabolite biosynthesis. In terms of biological role, non-ribosomal peptide synthetase; part of the gene cluster that mediates the biosynthesis of the cyclic tetrapeptide apicidin F (APF). The non-ribosomal peptide synthetase apf1 incorporates four different amino acids to produce apicidin F: L-phenylalanine, D-pipecolic acid (D-pip), N-methoxy-L-tryptophan and L-2-aminooctanedioic acid. L-Phenylalanine is the only proteinogenic amino acid directly used by apf1. The 3 other apf1 substrates are non-proteinogenic and have to be modified by other enzymes of the cluster. Lysine is converted to delta-1-pyrroline-5-carboxylate (P5C) which is reduced to L-pipecolic acid (L-pip) by apf3. L-pip is epimerized to D-pip, probably by apf1 activity, prior to incorporation. L-Tryptophan is N-oxidyzed by one of the cytochrome P450 monooxygenases (apf7 or apf8), and further methylated at the hydroxy group by the O-methyltransferase apf6 to yield N-methoxy-L-tryptophan. The synthesis of the fourth apf1 substrate is more complex. The fatty acid synthase apf5 is involved in the synthesis of the octanoic acid backbone of L-2-aminooctanedioic acid by fixing one acetyl-CoA unit and three malonyl-CoA units. Then one of the cytochrome P450 monooxygenases (apf7 or apf8) may oxidize this backbone to 2-oxooctanoic acid. The aminotransferase apf4 is predicted to catalyze the exchange of the keto group with an amino group. The next step would be the oxidation of 2-aminooctanoic acid by one of the cytochrome P450 monooxygenases (apf7 or apf8). The last step is the oxidation of 2-amino-8-hydroxyoctanoic acid to 2-aminooctanedioic acid is catalyzed by the FAD-dependent monooxygenase apf9. This is Apicidin F synthase from Gibberella fujikuroi (strain CBS 195.34 / IMI 58289 / NRRL A-6831) (Bakanae and foot rot disease fungus).